The sequence spans 229 residues: CRISPR pre-crRNA endoribonuclease Cas5d (229 aa).

It belongs to the CRISPR-associated protein Cas5 family. Subtype I-C/Dvulg subfamily. Does not require a metal cofactor. is required as a cofactor.

CRISPR (clustered regularly interspaced short palindromic repeat) is an adaptive immune system that provides protection against mobile genetic elements (viruses, transposable elements and conjugative plasmids). CRISPR clusters contain spacers, sequences complementary to antecedent mobile elements, and target invading nucleic acids. CRISPR clusters are transcribed and processed into CRISPR RNA (crRNA). This protein is a sequence-specific endonuclease that cleaves pre-crRNA into mature crRNA, possibly by an intramolecular attack of the 2'-hydroxyl group of G26 on the scissile phosphodiester, cutting the precursor 3' to G26 residue yielding 5'-hydroxyl and 2' and/or 3' ends lacking a hydroxyl group (perhaps a 2'/3' cyclic phosphodiester). Requires between 4 and 8 nt downstream of the cleavage site for both binding and cleavage of pre-crRNA. Substitution with dG at this position abolishes cleavage but not RNA binding. Does not cleave pre-crRNA associated with the M.succiniciproducens strain MBEL55E Cas5 protein (AC Q65TW5) CRISPR locus. This Thermus thermophilus (strain ATCC BAA-163 / DSM 7039 / HB27) protein is CRISPR pre-crRNA endoribonuclease Cas5d.